The chain runs to 382 residues: Chaperone protein DnaJ (382 aa).

A J domain is found at 5-70 (DYYELLGVQK…EKRAAYDRYG (66 aa)). The CR-type zinc-finger motif lies at 146 to 224 (GAEKEISFRK…CHGEGRVRRT (79 aa)). 8 residues coordinate Zn(2+): Cys159, Cys162, Cys176, Cys179, Cys198, Cys201, Cys212, and Cys215. CXXCXGXG motif repeat units lie at residues 159–166 (CERCDGSG), 176–183 (CPTCRGAG), 198–205 (CPTCGGMG), and 212–219 (CTVCHGEG). Positions 230-250 (RIPPGVDNGSRLRSSGNGEAG) are disordered.

This sequence belongs to the DnaJ family. In terms of assembly, homodimer. It depends on Zn(2+) as a cofactor.

It is found in the cytoplasm. Functionally, participates actively in the response to hyperosmotic and heat shock by preventing the aggregation of stress-denatured proteins and by disaggregating proteins, also in an autonomous, DnaK-independent fashion. Unfolded proteins bind initially to DnaJ; upon interaction with the DnaJ-bound protein, DnaK hydrolyzes its bound ATP, resulting in the formation of a stable complex. GrpE releases ADP from DnaK; ATP binding to DnaK triggers the release of the substrate protein, thus completing the reaction cycle. Several rounds of ATP-dependent interactions between DnaJ, DnaK and GrpE are required for fully efficient folding. Also involved, together with DnaK and GrpE, in the DNA replication of plasmids through activation of initiation proteins. This Opitutus terrae (strain DSM 11246 / JCM 15787 / PB90-1) protein is Chaperone protein DnaJ.